Reading from the N-terminus, the 354-residue chain is Holliday junction branch migration complex subunit RuvB (354 aa).

Positions 1 to 38 (MSDFERTEFELPPGVGHSQNEDLNPQQTAGDSDIDTSL) are disordered. The segment at 2–199 (SDFERTEFEL…FGFTAQMEFY (198 aa)) is large ATPase domain (RuvB-L). Polar residues predominate over residues 17-30 (HSQNEDLNPQQTAG). Residues Leu38, Arg39, Gly80, Lys83, Thr84, Thr85, 146–148 (EDF), Arg189, Tyr199, and Arg236 each bind ATP. Thr84 serves as a coordination point for Mg(2+). The segment at 200-270 (DTADLTRVVT…VARAALLVFD (71 aa)) is small ATPAse domain (RuvB-S). The interval 273–354 (ESGLDRLDRA…LEPPEGTIGL (82 aa)) is head domain (RuvB-H). Residues Arg328 and Arg333 each contribute to the DNA site.

The protein belongs to the RuvB family. Homohexamer. Forms an RuvA(8)-RuvB(12)-Holliday junction (HJ) complex. HJ DNA is sandwiched between 2 RuvA tetramers; dsDNA enters through RuvA and exits via RuvB. An RuvB hexamer assembles on each DNA strand where it exits the tetramer. Each RuvB hexamer is contacted by two RuvA subunits (via domain III) on 2 adjacent RuvB subunits; this complex drives branch migration. In the full resolvosome a probable DNA-RuvA(4)-RuvB(12)-RuvC(2) complex forms which resolves the HJ.

The protein localises to the cytoplasm. It catalyses the reaction ATP + H2O = ADP + phosphate + H(+). In terms of biological role, the RuvA-RuvB-RuvC complex processes Holliday junction (HJ) DNA during genetic recombination and DNA repair, while the RuvA-RuvB complex plays an important role in the rescue of blocked DNA replication forks via replication fork reversal (RFR). RuvA specifically binds to HJ cruciform DNA, conferring on it an open structure. The RuvB hexamer acts as an ATP-dependent pump, pulling dsDNA into and through the RuvAB complex. RuvB forms 2 homohexamers on either side of HJ DNA bound by 1 or 2 RuvA tetramers; 4 subunits per hexamer contact DNA at a time. Coordinated motions by a converter formed by DNA-disengaged RuvB subunits stimulates ATP hydrolysis and nucleotide exchange. Immobilization of the converter enables RuvB to convert the ATP-contained energy into a lever motion, pulling 2 nucleotides of DNA out of the RuvA tetramer per ATP hydrolyzed, thus driving DNA branch migration. The RuvB motors rotate together with the DNA substrate, which together with the progressing nucleotide cycle form the mechanistic basis for DNA recombination by continuous HJ branch migration. Branch migration allows RuvC to scan DNA until it finds its consensus sequence, where it cleaves and resolves cruciform DNA. This chain is Holliday junction branch migration complex subunit RuvB, found in Corynebacterium jeikeium (strain K411).